The primary structure comprises 321 residues: NADPH-dependent D-xylose reductase (321 aa).

The Proton donor role is filled by Tyr-50. Position 112 (His-112) interacts with substrate. Residues 167 to 168 (SN), 216 to 225 (SSFGPQSFVE), and 272 to 282 (KSNKKERLLGN) each bind NADP(+).

The protein belongs to the aldo/keto reductase family.

The enzyme catalyses xylitol + NAD(+) = D-xylose + NADH + H(+). The catalysed reaction is xylitol + NADP(+) = D-xylose + NADPH + H(+). The protein operates within carbohydrate metabolism; D-xylose degradation. Functionally, reduces D-xylose into xylitol. Preferentially utilizes NADPH as a cosubstrate. This chain is NADPH-dependent D-xylose reductase (XYL1), found in Candida boidinii (Yeast).